The following is a 1111-amino-acid chain: Histone deacetylase 5 (1111 aa).

Lysine 35 participates in a covalent cross-link: Glycyl lysine isopeptide (Lys-Gly) (interchain with G-Cter in SUMO2). 3 disordered regions span residues 40 to 63, 107 to 136, and 187 to 272; these read GAMP…RGAL, RQHE…EQQR, and KEPT…SSPL. The span at 238–249 shows a compositional bias: basic and acidic residues; that stretch reads DSRDDFPLRKTA. Serine 250 carries the phosphoserine; by AMPK, CaMK1, SIK1 and PKD/PRKD1 modification. Residues 263-272 are compositionally biased toward basic and acidic residues; that stretch reads KVAERRSSPL. At threonine 283 the chain carries Phosphothreonine; by PKC. The disordered stretch occupies residues 474–495; sequence TVGKLPRHRPLSRTQSSPLPQS. Residues 485-495 show a composition bias toward low complexity; it reads SRTQSSPLPQS. Phosphoserine; by AMPK, CaMK1, SIK1 and PKD/PRKD1 is present on serine 489. N6-acetyllysine is present on lysine 524. Disordered stretches follow at residues 527–611 and 645–666; these read TKTG…LEES and LGRT…DQPT. The segment covering 572 to 610 has biased composition (acidic residues); the sequence is STQEDLEEEEDEEEEDEDCIQVKDEEGESGPDEGPDLEE. Phosphoserine is present on residues serine 600 and serine 650. A histone deacetylase region spans residues 671–1017; the sequence is TTGVVYDTFM…VSALLSVELQ (347 aa). Residues cysteine 685, cysteine 687, histidine 693, and cysteine 770 each contribute to the Zn(2+) site. Histidine 822 is an active-site residue. Residues 1070 to 1109 carry the Nuclear export signal motif; that stretch reads EEAETVSAMALLSVGAEQAQAVATQEHSPRPAEEPMEQEP. Residues 1086 to 1111 are disordered; sequence EQAQAVATQEHSPRPAEEPMEQEPTL. Serine 1097 bears the Phosphoserine mark.

It belongs to the histone deacetylase family. HD type 2 subfamily. As to quaternary structure, interacts with AHRR, BAHD1, BCOR, HDAC7, HDAC9, CTBP1, MEF2C, NCOR2, NRIP1, PHB2 and a 14-3-3 chaperone protein. Interacts with BCL6, DDIT3/CHOP, GRK5, KDM5B and MYOCD. Interacts with EP300 in the presence of TFAP2C. Interacts with ANKRA2. Interacts with CUL7 (as part of the 3M complex); negatively regulated by ANKRA2. Interacts with ZBTB7B; the interaction allows the recruitment of HDAC4 on CD8 loci for deacetylation and possible inhibition of CD8 genes expression. Interacts with RARA. Phosphorylated by AMPK, CaMK1, SIK1 and PRKD1 at Ser-250 and Ser-489. The phosphorylation is required for the export to the cytoplasm and inhibition. Phosphorylated by the PKC kinases PKN1 and PKN2, impairing nuclear import. Phosphorylated by GRK5, leading to nuclear export of HDAC5 and allowing MEF2-mediated transcription. In terms of processing, ubiquitinated. Polyubiquitination however does not lead to its degradation.

The protein localises to the nucleus. It localises to the cytoplasm. It carries out the reaction N(6)-acetyl-L-lysyl-[histone] + H2O = L-lysyl-[histone] + acetate. Responsible for the deacetylation of lysine residues on the N-terminal part of the core histones (H2A, H2B, H3 and H4). Histone deacetylation gives a tag for epigenetic repression and plays an important role in transcriptional regulation, cell cycle progression and developmental events. Histone deacetylases act via the formation of large multiprotein complexes. Involved in muscle maturation by repressing transcription of myocyte enhancer MEF2C. During muscle differentiation, it shuttles into the cytoplasm, allowing the expression of myocyte enhancer factors. Serves as a corepressor of RARA and causes its deacetylation. In association with RARA, plays a role in the repression of microRNA-10a and thereby in the inflammatory response. The sequence is that of Histone deacetylase 5 (HDAC5) from Cricetulus griseus (Chinese hamster).